A 123-amino-acid chain; its full sequence is Large ribosomal subunit protein uL14 (123 aa).

Belongs to the universal ribosomal protein uL14 family. In terms of assembly, part of the 50S ribosomal subunit. Forms a cluster with proteins L3 and L19. In the 70S ribosome, L14 and L19 interact and together make contacts with the 16S rRNA in bridges B5 and B8.

In terms of biological role, binds to 23S rRNA. Forms part of two intersubunit bridges in the 70S ribosome. The polypeptide is Large ribosomal subunit protein uL14 (Vibrio vulnificus (strain CMCP6)).